An 80-amino-acid chain; its full sequence is Small ribosomal subunit protein bS16 (80 aa).

This sequence belongs to the bacterial ribosomal protein bS16 family.

The sequence is that of Small ribosomal subunit protein bS16 from Acholeplasma laidlawii (strain PG-8A).